A 1889-amino-acid chain; its full sequence is E3 ubiquitin-protein ligase UBR3 (1889 aa).

Residues 1 to 27 (MAAAAAAAAVGDPQPPQPEAPAQGLAL) are disordered. The segment at 118–189 (ALCGLVWTAN…ESGFCRRHQI (72 aa)) adopts a UBR-type zinc-finger fold. The disordered stretch occupies residues 338 to 362 (LGQIDSSDEEDQDGSQGLGKRKRVK). S343 and S344 each carry phosphoserine. 2 consecutive transmembrane segments (helical) span residues 761 to 781 (MLEG…HLGM) and 919 to 939 (LLHC…ILMD). A coiled-coil region spans residues 1167–1199 (KKITAAEKKTLDKEERRQKARERQQKLLAEFAS). A Phosphoserine modification is found at S1199. The segment at 1306–1364 (DSSCLLAVSIGWEGGVYVQTCGHTLHIDCHKSYMESLRNDQVLQGFSVDKGEFTCPLCR) adopts an RING-type; degenerate zinc-finger fold. A helical membrane pass occupies residues 1807 to 1827 (QNCGAGTGIFLLINASVIIII).

Belongs to the E3 ubiquitin-protein ligase UBR1-like family. Interacts with UBE2A and UBE2B. In terms of tissue distribution, expressed in numerous cells of the smell, touch, vision, hearing and taste senses. Expressed in cells of the olfactory pathway, including the olfactory cell layer of the main olfactory epithelium (MOE), a mitral neuron cell layer of the olfactory bulb (OB), and a pyramidal cell layer of the piriform cortex of the olfactory cortex (OC). Expressed in the vomeronasal sensory epithelium of the vomeronasal organ (VNO) and the mitral cells of the accessory olfactory bulb. Expressed in tactile tissues, including the dorsal root ganglion, trigeminal ganglion and follicle-sinus complexes. Expressed in cells between hair follicle and sinus and also in the region of the rete ridge collar. Expressed in taste buds of the fungiform, circumvallate, and foliate papillae. Expressed in the spiral ganglion, the organ of Corti of the cochlea in the inner ear, in the sensory epithelium of macula and vestibular ganglion of the balancing system (at protein level). Expressed in the liver and skeletal muscle.

The protein resides in the membrane. It carries out the reaction S-ubiquitinyl-[E2 ubiquitin-conjugating enzyme]-L-cysteine + [acceptor protein]-L-lysine = [E2 ubiquitin-conjugating enzyme]-L-cysteine + N(6)-ubiquitinyl-[acceptor protein]-L-lysine.. The protein operates within protein modification; protein ubiquitination. Its function is as follows. E3 ubiquitin-protein ligase which is a component of the N-end rule pathway. Does not bind to proteins bearing specific N-terminal residues that are destabilizing according to the N-end rule, leading to their ubiquitination and subsequent degradation. May play a role in Shh signaling by mediating the ubiquitination of Kif7. May be important for MYH9 function in certain tissues, possibly by regulating the ubiquitination of MYH9 and consequently affecting its interaction with MYO7A. The chain is E3 ubiquitin-protein ligase UBR3 (Ubr3) from Mus musculus (Mouse).